The primary structure comprises 217 residues: Probable septum site-determining protein MinC (217 aa).

Belongs to the MinC family. As to quaternary structure, interacts with MinD and FtsZ.

Its function is as follows. Cell division inhibitor that blocks the formation of polar Z ring septums. Rapidly oscillates between the poles of the cell to destabilize FtsZ filaments that have formed before they mature into polar Z rings. Prevents FtsZ polymerization. The protein is Probable septum site-determining protein MinC of Pelotomaculum thermopropionicum (strain DSM 13744 / JCM 10971 / SI).